We begin with the raw amino-acid sequence, 539 residues long: Lipid scramblase CLPTM1L (539 aa).

At 1–10 the chain is on the cytoplasmic side; the sequence is MWSGRSSFTS. The helical transmembrane segment at 11 to 31 threads the bilayer; sequence LVVGVFLVYVVHTCWVMYGIV. The Extracellular segment spans residues 32-285; that stretch reads YTRPCSGDSN…LKGIFVDTNL (254 aa). N-linked (GlcNAc...) asparagine glycans are attached at residues asparagine 91 and asparagine 101. Residues 286–306 traverse the membrane as a helical segment; that stretch reads YLLALTFFVAAFHLLFDFLAF. The Cytoplasmic portion of the chain corresponds to 307-325; the sequence is KSDISFWKKKKSMIGMSTK. A helical transmembrane segment spans residues 326-342; it reads AVLWRCFSTVVIFLFLL. The Extracellular portion of the chain corresponds to 343-403; that stretch reads DEQTSLLVLI…TEKYDAQAMK (61 aa). A helical transmembrane segment spans residues 404-424; that stretch reads YLSYLLYPLCVGGAVYSLLNI. Residues 425 to 429 are Cytoplasmic-facing; it reads KYKSW. The helical transmembrane segment at 430–450 threads the bilayer; sequence YSWLINSFVNGVYAFGFLFML. Residues 451 to 539 are Extracellular-facing; the sequence is PQLFVNYKMK…EQPKRKPHPD (89 aa).

This sequence belongs to the CLPTM1 family.

The protein resides in the endoplasmic reticulum membrane. The enzyme catalyses a 6-(alpha-D-glucosaminyl)-1-(1,2-diacyl-sn-glycero-3-phospho)-1D-myo-inositol(in) = a 6-(alpha-D-glucosaminyl)-1-(1,2-diacyl-sn-glycero-3-phospho)-1D-myo-inositol(out). It catalyses the reaction 6-(alpha-D-glucosaminyl)-(1-octadecanoyl,2-(9Z)-octadecenoyl-sn-glycero-3-phospho)-1D-myo-inositol(in) = 6-(alpha-D-glucosaminyl)-(1-octadecanoyl,2-(9Z)-octadecenoyl-sn-glycero-3-phospho)-1D-myo-inositol(out). It carries out the reaction a 1,2-diacyl-sn-glycero-3-phospho-(1D-myo-inositol)(in) = a 1,2-diacyl-sn-glycero-3-phospho-(1D-myo-inositol)(out). The catalysed reaction is a 1,2-diacyl-sn-glycero-3-phosphocholine(in) = a 1,2-diacyl-sn-glycero-3-phosphocholine(out). The enzyme catalyses a 1,2-diacyl-sn-glycero-3-phosphoethanolamine(in) = a 1,2-diacyl-sn-glycero-3-phosphoethanolamine(out). Its function is as follows. Scramblase that mediates the translocation of glucosaminylphosphatidylinositol (alpha-D-GlcN-(1-6)-(1,2-diacyl-sn-glycero-3-phospho)-1D-myo-inositol, GlcN-PI) across the endoplasmic reticulum (ER) membrane, from the cytosolic leaflet to the luminal leaflet of the ER membrane, where it participates in the biosynthesis of glycosylphosphatidylinositol (GPI). GPI is a lipid glycoconjugate involved in post-translational modification of proteins. Can also translocate 1,2-diacyl-sn-glycero-3-phospho-(1D-myo-inositol) (phosphatidylinositol or PI), as well as several other phospholipids (1,2-diacyl-sn-glycero-3-phosphocholine, 1,2-diacyl-sn-glycero-3-phosphoethanolamine), and N-acetylglucosaminylphosphatidylinositol (GlcNAc-PI) in vitro. This is Lipid scramblase CLPTM1L (Clptm1l) from Mus musculus (Mouse).